The sequence spans 609 residues: Arginine--tRNA ligase (609 aa).

Positions alanine 132–histidine 142 match the 'HIGH' region motif.

Belongs to the class-I aminoacyl-tRNA synthetase family. Monomer.

It is found in the cytoplasm. It catalyses the reaction tRNA(Arg) + L-arginine + ATP = L-arginyl-tRNA(Arg) + AMP + diphosphate. The sequence is that of Arginine--tRNA ligase from Psychrobacter cryohalolentis (strain ATCC BAA-1226 / DSM 17306 / VKM B-2378 / K5).